An 85-amino-acid polypeptide reads, in one-letter code: Conotoxin MaIr94 (85 aa).

The N-terminal stretch at 1 to 22 (MKLTCVLIITVLFLTACQLTAA) is a signal peptide. A propeptide spanning residues 23–49 (GNSRDKQEDPVVRSSGEVQRSEDIKLA) is cleaved from the precursor. 3 cysteine pairs are disulfide-bonded: C52–C69, C59–C73, and C68–C84.

The protein belongs to the conotoxin O1 superfamily. As to expression, expressed by the venom duct.

Its subcellular location is the secreted. Produces no obvious effect on ionic currents when tested on the mouse dorsal rooted ganglia (DRG). The chain is Conotoxin MaIr94 from Conus marmoreus (Marble cone).